A 242-amino-acid chain; its full sequence is Probable septum site-determining protein MinC (242 aa).

It belongs to the MinC family. As to quaternary structure, interacts with MinD and FtsZ.

In terms of biological role, cell division inhibitor that blocks the formation of polar Z ring septums. Rapidly oscillates between the poles of the cell to destabilize FtsZ filaments that have formed before they mature into polar Z rings. Prevents FtsZ polymerization. The chain is Probable septum site-determining protein MinC from Buchnera aphidicola subsp. Schizaphis graminum (strain Sg).